Reading from the N-terminus, the 402-residue chain is Putative PDZ domain-containing protein PDZK1P1 (402 aa).

PDZ domains lie at 12–93 and 121–206; these read RLCY…VDKE and IVEM…VDKE. Residues 230-258 form a disordered region; the sequence is GSVKEAPAPTPTSLEVSSPPDTTEEEDHK. Polar residues predominate over residues 240 to 250; the sequence is PTSLEVSSPPD. The 81-residue stretch at 261–341 folds into the PDZ 3 domain; it reads LCRLAKGENG…NVTLLVCGKK (81 aa). The disordered stretch occupies residues 362–402; sequence DTPPDSKEGIVVESKHDSHMAKERAHSTASHSSSNSEDTEM. Positions 365–387 are enriched in basic and acidic residues; sequence PDSKEGIVVESKHDSHMAKERAH. Residues 388-402 are compositionally biased toward low complexity; it reads STASHSSSNSEDTEM.

This sequence belongs to the NHER family.

The polypeptide is Putative PDZ domain-containing protein PDZK1P1 (Homo sapiens (Human)).